A 690-amino-acid chain; its full sequence is Methionine--tRNA ligase (690 aa).

The 'HIGH' region motif lies at 12 to 22; that stretch reads PYANGSIHLGH. Residues Cys143, Cys146, Cys156, and Cys159 each coordinate Zn(2+). The short motif at 328–332 is the 'KMSKS' region element; that stretch reads KMSKS. Lys331 serves as a coordination point for ATP. A tRNA-binding domain is found at 582 to 690; the sequence is DFAKVDLRIA…SGAEPGMKVK (109 aa).

The protein belongs to the class-I aminoacyl-tRNA synthetase family. MetG type 1 subfamily. Homodimer. Requires Zn(2+) as cofactor.

Its subcellular location is the cytoplasm. The catalysed reaction is tRNA(Met) + L-methionine + ATP = L-methionyl-tRNA(Met) + AMP + diphosphate. In terms of biological role, is required not only for elongation of protein synthesis but also for the initiation of all mRNA translation through initiator tRNA(fMet) aminoacylation. This chain is Methionine--tRNA ligase, found in Thiobacillus denitrificans (strain ATCC 25259 / T1).